The following is a 589-amino-acid chain: Sphingosine-1-phosphate lyase (589 aa).

At M1–D58 the chain is on the lumenal side. A glycan (N-linked (GlcNAc...) asparagine) is linked at N6. A helical membrane pass occupies residues Y59–L76. At K77–K589 the chain is on the cytoplasmic side. An N6-(pyridoxal phosphate)lysine modification is found at K380.

This sequence belongs to the group II decarboxylase family. Sphingosine-1-phosphate lyase subfamily. Homodimer. Requires pyridoxal 5'-phosphate as cofactor. In terms of processing, glycosylated.

Its subcellular location is the endoplasmic reticulum membrane. It carries out the reaction sphinganine 1-phosphate = hexadecanal + phosphoethanolamine. It catalyses the reaction (4R)-hydroxysphinganine 1-phosphate = (2R)-hydroxyhexadecanal + phosphoethanolamine. It participates in lipid metabolism; sphingolipid metabolism. Functionally, sphingosine-1-phosphate lyase that cleaves phosphorylated sphingoid bases (PSBs), such as sphingosine-1-phosphate, into fatty aldehydes and phosphoethanolamine. Prefers C-16 dihydrosphingosine-l-phosphate (DHS-P) as a substrate. Regulates intracellular levels of sphingolipid long-chain base phosphates (LCBPs). Plays a role in the regulation of global responses to nutrient deprivation in yeast. The polypeptide is Sphingosine-1-phosphate lyase (Saccharomyces cerevisiae (strain ATCC 204508 / S288c) (Baker's yeast)).